A 265-amino-acid polypeptide reads, in one-letter code: Non-seed lectin (265 aa).

Positions 1–21 (MALYRTKELVSLVSIMFVLLA) form a signal peptide, or 23. N-linked (GlcNAc...) asparagine glycosylation is found at N59 and N127.

It belongs to the leguminous lectin family. As to quaternary structure, monomer. As to expression, most highly expressed in the epidermal layer of developing shoot tips.

The chain is Non-seed lectin from Pisum sativum (Garden pea).